We begin with the raw amino-acid sequence, 347 residues long: Ribosomal RNA small subunit methyltransferase C (347 aa).

It belongs to the methyltransferase superfamily. RsmC family. Monomer.

It localises to the cytoplasm. It carries out the reaction guanosine(1207) in 16S rRNA + S-adenosyl-L-methionine = N(2)-methylguanosine(1207) in 16S rRNA + S-adenosyl-L-homocysteine + H(+). Functionally, specifically methylates the guanine in position 1207 of 16S rRNA in the 30S particle. This is Ribosomal RNA small subunit methyltransferase C from Yersinia pseudotuberculosis serotype IB (strain PB1/+).